Reading from the N-terminus, the 44-residue chain is Photosystem I reaction center subunit IX (44 aa).

The helical transmembrane segment at 7–27 (YLSVAPVLTTLWFGSLAGLLI) threads the bilayer.

It belongs to the PsaJ family.

It is found in the plastid. Its subcellular location is the chloroplast thylakoid membrane. Its function is as follows. May help in the organization of the PsaE and PsaF subunits. This Liriodendron tulipifera (Tuliptree) protein is Photosystem I reaction center subunit IX.